Consider the following 295-residue polypeptide: Protoheme IX farnesyltransferase 2 (295 aa).

9 helical membrane-spanning segments follow: residues 9–29, 36–56, 83–103, 108–128, 135–155, 163–183, 209–229, 230–250, and 264–284; these read ITKP…FFLA, FALF…GCVF, LTLA…LLYV, LSAF…SLWL, GTLV…CAVS, VTLL…IAIF, IVLY…GGYA, GLGY…MAWG, and VFGF…VDSQ.

This sequence belongs to the UbiA prenyltransferase family. Protoheme IX farnesyltransferase subfamily.

It is found in the cell inner membrane. It carries out the reaction heme b + (2E,6E)-farnesyl diphosphate + H2O = Fe(II)-heme o + diphosphate. It participates in porphyrin-containing compound metabolism; heme O biosynthesis; heme O from protoheme: step 1/1. Functionally, converts heme B (protoheme IX) to heme O by substitution of the vinyl group on carbon 2 of heme B porphyrin ring with a hydroxyethyl farnesyl side group. This chain is Protoheme IX farnesyltransferase 2, found in Pseudomonas putida (strain W619).